The primary structure comprises 421 residues: Putative transporter AmpG 3 (421 aa).

Transmembrane regions (helical) follow at residues 6 to 26, 41 to 61, 80 to 100, 104 to 124, 139 to 159, 166 to 186, 230 to 250, 274 to 294, 297 to 317, 324 to 344, 360 to 380, and 388 to 408; these read YLIG…LIFF, IIGA…WSPF, WALV…KRSP, LCIT…QDIV, LSIV…LGSV, IIFG…VGPI, LLLI…PMAM, LLIM…IGIF, VLIG…LATI, FIIT…IISI, AISA…GGIC, and VFFL…YTIY.

This sequence belongs to the major facilitator superfamily.

Its subcellular location is the cell inner membrane. This chain is Putative transporter AmpG 3 (ampG3), found in Rickettsia prowazekii (strain Madrid E).